The chain runs to 459 residues: Phosphomethylpyrimidine synthase (459 aa).

Residues asparagine 80, methionine 109, tyrosine 139, histidine 175, 195–197 (SRG), 236–239 (DSLR), and glutamate 275 each bind substrate. Residue histidine 279 coordinates Zn(2+). Tyrosine 302 is a substrate binding site. Histidine 343 contributes to the Zn(2+) binding site. [4Fe-4S] cluster contacts are provided by cysteine 423, cysteine 426, and cysteine 431.

The protein belongs to the ThiC family. [4Fe-4S] cluster serves as cofactor.

The catalysed reaction is 5-amino-1-(5-phospho-beta-D-ribosyl)imidazole + S-adenosyl-L-methionine = 4-amino-2-methyl-5-(phosphooxymethyl)pyrimidine + CO + 5'-deoxyadenosine + formate + L-methionine + 3 H(+). It functions in the pathway cofactor biosynthesis; thiamine diphosphate biosynthesis. Functionally, catalyzes the synthesis of the hydroxymethylpyrimidine phosphate (HMP-P) moiety of thiamine from aminoimidazole ribotide (AIR) in a radical S-adenosyl-L-methionine (SAM)-dependent reaction. In Synechocystis sp. (strain ATCC 27184 / PCC 6803 / Kazusa), this protein is Phosphomethylpyrimidine synthase.